A 546-amino-acid polypeptide reads, in one-letter code: 2-isopropylmalate synthase (546 aa).

Residues 5 to 274 enclose the Pyruvate carboxyltransferase domain; that stretch reads ITIFDTTLRD…TADVHTEHLT (270 aa). Mn(2+) contacts are provided by Asp-14, His-209, His-211, and Asn-245. The interval 415-546 is regulatory domain; sequence RLDQFSVHLS…QNGIMHTYGE (132 aa).

Belongs to the alpha-IPM synthase/homocitrate synthase family. LeuA type 1 subfamily. Homodimer. Mn(2+) is required as a cofactor.

It localises to the cytoplasm. The enzyme catalyses 3-methyl-2-oxobutanoate + acetyl-CoA + H2O = (2S)-2-isopropylmalate + CoA + H(+). It functions in the pathway amino-acid biosynthesis; L-leucine biosynthesis; L-leucine from 3-methyl-2-oxobutanoate: step 1/4. Its function is as follows. Catalyzes the condensation of the acetyl group of acetyl-CoA with 3-methyl-2-oxobutanoate (2-ketoisovalerate) to form 3-carboxy-3-hydroxy-4-methylpentanoate (2-isopropylmalate). The protein is 2-isopropylmalate synthase of Salinibacter ruber (strain M8).